Consider the following 2344-residue polypeptide: Pecanex-like protein 1 (2344 aa).

The next 2 membrane-spanning stretches (helical) occupy residues 33-53 (ALHL…YMAL) and 57-77 (MIIV…LKMV). Disordered stretches follow at residues 101 to 163 (QRAK…GSSR), 271 to 290 (SHSY…SSSA), 306 to 692 (QQQR…TRAR), and 749 to 837 (VTRS…VQSR). Over residues 143 to 163 (SSRNSYAGLDPSNQIGSGSSR) the composition is skewed to polar residues. The segment covering 272–282 (HSYRKEHRPRG) has biased composition (basic residues). The span at 328-343 (RESSAGKSCPPAQSQP) shows a compositional bias: polar residues. The span at 372 to 390 (SLRSLSTRSSGSTESYCSG) shows a compositional bias: low complexity. The span at 396–406 (NSTLSSYKSEQ) shows a compositional bias: polar residues. Basic and acidic residues-rich tracts occupy residues 416-458 (LSEH…DKTA), 508-522 (RPPE…EQSE), and 531-547 (RVCK…DVRP). A compositionally biased stretch (basic residues) spans 557-572 (TSAHKPGRRRTGKKRA). The segment covering 616 to 638 (SIHSAHQFSSDSSSSATSHSCQS) has biased composition (low complexity). Residues 749-758 (VTRSRNSLPS) show a composition bias toward polar residues. 2 stretches are compositionally biased toward low complexity: residues 770–781 (AATGAAQASEEA) and 817–835 (LSLQ…VKVQ). 3 helical membrane passes run 1010–1030 (ILAV…LIQG), 1035–1055 (IWVF…LKSV), and 1069–1089 (IIAY…WLLD). N-linked (GlcNAc...) asparagine glycosylation occurs at asparagine 1094. A helical membrane pass occupies residues 1119–1139 (LVIVFTLCFPIVFFIGLLPQV). An N-linked (GlcNAc...) asparagine glycan is attached at asparagine 1158. 4 consecutive transmembrane segments (helical) span residues 1163 to 1183 (LLAA…LYGL), 1196 to 1216 (HVPV…YHLS), 1269 to 1289 (LVVC…TVFT), and 1297 to 1317 (YVLY…LPQV). Asparagine 1582, asparagine 1723, asparagine 1985, and asparagine 2075 each carry an N-linked (GlcNAc...) asparagine glycan. Residues 2051–2123 (EDSDTGGGTS…SSLVRQSPAR (73 aa)) are disordered. Composition is skewed to polar residues over residues 2061–2081 (CPGN…QGST) and 2095–2118 (PTTS…SLVR). Asparagine 2231, asparagine 2237, and asparagine 2263 each carry an N-linked (GlcNAc...) asparagine glycan.

The protein belongs to the pecanex family.

The protein resides in the membrane. The chain is Pecanex-like protein 1 from Mus musculus (Mouse).